The sequence spans 948 residues: Valine--tRNA ligase (948 aa).

The 'HIGH' region signature appears at Pro40 to His50. Positions Lys551–Ser555 match the 'KMSKS' region motif. Lys554 is an ATP binding site. Residues Leu879–Ile945 are a coiled coil.

Belongs to the class-I aminoacyl-tRNA synthetase family. ValS type 1 subfamily. As to quaternary structure, monomer.

Its subcellular location is the cytoplasm. It catalyses the reaction tRNA(Val) + L-valine + ATP = L-valyl-tRNA(Val) + AMP + diphosphate. Its function is as follows. Catalyzes the attachment of valine to tRNA(Val). As ValRS can inadvertently accommodate and process structurally similar amino acids such as threonine, to avoid such errors, it has a 'posttransfer' editing activity that hydrolyzes mischarged Thr-tRNA(Val) in a tRNA-dependent manner. This chain is Valine--tRNA ligase, found in Pseudomonas syringae pv. tomato (strain ATCC BAA-871 / DC3000).